Reading from the N-terminus, the 45-residue chain is DNA-directed RNA polymerase subunit Rpo12 (45 aa).

Zn(2+)-binding residues include Cys8, Cys23, and Cys26.

Belongs to the archaeal Rpo12/eukaryotic RPC10 RNA polymerase subunit family. In terms of assembly, part of the RNA polymerase complex. Zn(2+) is required as a cofactor.

It localises to the cytoplasm. The enzyme catalyses RNA(n) + a ribonucleoside 5'-triphosphate = RNA(n+1) + diphosphate. DNA-dependent RNA polymerase (RNAP) catalyzes the transcription of DNA into RNA using the four ribonucleoside triphosphates as substrates. The polypeptide is DNA-directed RNA polymerase subunit Rpo12 (Methanocella arvoryzae (strain DSM 22066 / NBRC 105507 / MRE50)).